A 184-amino-acid polypeptide reads, in one-letter code: ADP-ribosylation factor-like protein 2 (184 aa).

Gly2 is lipidated: N-myristoyl glycine. GTP is bound at residue 23–30 (GLDNAGKT). Ser45 carries the post-translational modification Phosphoserine. GTP-binding positions include 66–70 (DVGGQ) and Gly68. A Glycyl lysine isopeptide (Lys-Gly) (interchain with G-Cter in ubiquitin) cross-link involves residue Lys71. Residue 125–128 (NKQD) coordinates GTP.

This sequence belongs to the small GTPase superfamily. Arf family. As to quaternary structure, interacts with ELMOD2. Interacts with ARL2BP; the GTP-bound form interacts with ARL2BP. The GDP-bound form interacts preferentially with TBCD. Interacts with UNC119. Found in a complex with ARL2, ARL2BP and SLC25A4. The GTP-bound form interacts with PDE6D. Found in a complex with ARL2, ARL2BP and SLC25A6. Found in a complex with at least ARL2, PPP2CB, PPP2R1A, PPP2R2A, PPP2R5E and TBCD. Post-translationally, not N-myristoylated. In terms of tissue distribution, expressed in liver and retina (at protein level).

It localises to the nucleus. The protein localises to the mitochondrion intermembrane space. It is found in the cytoplasm. The protein resides in the cytoskeleton. Its subcellular location is the microtubule organizing center. It localises to the centrosome. The protein localises to the mitochondrion. Its function is as follows. Small GTP-binding protein which cycles between an inactive GDP-bound and an active GTP-bound form, and the rate of cycling is regulated by guanine nucleotide exchange factors (GEF) and GTPase-activating proteins (GAP). GTP-binding protein that does not act as an allosteric activator of the cholera toxin catalytic subunit. Regulates formation of new microtubules and centrosome integrity. Prevents the TBCD-induced microtubule destruction. Participates in association with TBCD, in the disassembly of the apical junction complexes. Antagonizes the effect of TBCD on epithelial cell detachment and tight and adherens junctions disassembly. Together with ARL2, plays a role in the nuclear translocation, retention and transcriptional activity of STAT3. Component of a regulated secretory pathway involved in Ca(2+)-dependent release of acetylcholine. Required for normal progress through the cell cycle. This Bos taurus (Bovine) protein is ADP-ribosylation factor-like protein 2 (ARL2).